The primary structure comprises 507 residues: ATP synthase subunit alpha, chloroplastic (507 aa).

170–177 is an ATP binding site; the sequence is GDRQTGKT. Residue Thr257 is modified to Phosphothreonine.

It belongs to the ATPase alpha/beta chains family. As to quaternary structure, F-type ATPases have 2 components, CF(1) - the catalytic core - and CF(0) - the membrane proton channel. CF(1) has five subunits: alpha(3), beta(3), gamma(1), delta(1), epsilon(1). CF(0) has four main subunits: a, b, b' and c.

The protein resides in the plastid. Its subcellular location is the chloroplast thylakoid membrane. It carries out the reaction ATP + H2O + 4 H(+)(in) = ADP + phosphate + 5 H(+)(out). Its function is as follows. Produces ATP from ADP in the presence of a proton gradient across the membrane. The alpha chain is a regulatory subunit. The sequence is that of ATP synthase subunit alpha, chloroplastic from Barbarea verna (Land cress).